A 368-amino-acid polypeptide reads, in one-letter code: Cytochrome b (368 aa).

Transmembrane regions (helical) follow at residues 33 to 53, 77 to 99, 112 to 132, and 178 to 198; these read FGSL…FLAM, WLIR…THTG, TWMV…LGYV, and FYAL…MHII. Heme b is bound by residues histidine 83 and histidine 97. Residues histidine 182 and histidine 196 each coordinate heme b. Residue histidine 201 coordinates a ubiquinone. The next 4 membrane-spanning stretches (helical) occupy residues 224–244, 288–308, 323–343, and 345–365; these read FSAK…SVVL, LGGV…PMMN, IAFW…SKPV, and SPFE…YMIM.

Belongs to the cytochrome b family. As to quaternary structure, the main subunits of complex b-c1 are: cytochrome b, cytochrome c1 and the Rieske protein. The cofactor is heme b.

It localises to the mitochondrion inner membrane. Component of the ubiquinol-cytochrome c reductase complex (complex III or cytochrome b-c1 complex) that is part of the mitochondrial respiratory chain. The b-c1 complex mediates electron transfer from ubiquinol to cytochrome c. Contributes to the generation of a proton gradient across the mitochondrial membrane that is then used for ATP synthesis. The protein is Cytochrome b (mt:Cyt-b) of Bugula neritina (Brown bryozoan).